A 504-amino-acid polypeptide reads, in one-letter code: Maturase K (504 aa).

Belongs to the intron maturase 2 family. MatK subfamily.

It localises to the plastid. Its subcellular location is the chloroplast. Functionally, usually encoded in the trnK tRNA gene intron. Probably assists in splicing its own and other chloroplast group II introns. The sequence is that of Maturase K from Quercus rubra (Northern red oak).